Consider the following 257-residue polypeptide: Protein YIPF5 (257 aa).

Residues 1–124 lie on the Cytoplasmic side of the membrane; that stretch reads MSGFDNLNSG…RAADGSIMNE (124 aa). An interaction with Sec23 region spans residues 75–106; it reads PTTPQPFYGDSFEEEPPLLEELGINFDHIWQK. A helical membrane pass occupies residues 125 to 145; it reads TDLAGPVVFCLAFGATLLLAG. K146 is a topological domain (lumenal). The helical transmembrane segment at 147-167 threads the bilayer; sequence IQFGYVYGISAIGCLGMFCLL. The Cytoplasmic portion of the chain corresponds to 168–173; that stretch reads NLMSMT. A helical transmembrane segment spans residues 174-194; sequence GVSFGCVASVLGYCLLPMILL. Residues 195–196 are Lumenal-facing; the sequence is SS. A helical transmembrane segment spans residues 197–217; sequence FAVVFSLQGMVGILLTATIIG. The Cytoplasmic portion of the chain corresponds to 218–236; the sequence is WCSFSASKIFISALAMDGQ. A helical membrane pass occupies residues 237 to 257; that stretch reads QLLVAYPCALLYGVFALISVF.

This sequence belongs to the YIP1 family. In terms of assembly, interacts with the COPII coat components Sec23 (SEC23A and/or SEC23B) and Sec24 (SEC24A and/or SEC24B). Interacts with YIF1A. May interact with RAB1A. Interacts with YIPF3 and YIPF4. Ubiquitously expressed.

It localises to the golgi apparatus. The protein localises to the cis-Golgi network membrane. The protein resides in the cytoplasmic vesicle. Its subcellular location is the COPII-coated vesicle. It is found in the endoplasmic reticulum membrane. In terms of biological role, plays a role in transport between endoplasmic reticulum and Golgi. In pancreatic beta cells, required to transport proinsulin from endoplasmic reticulum into the Golgi. The protein is Protein YIPF5 of Mus musculus (Mouse).